The chain runs to 127 residues: Protein HI_1253 (127 aa).

The next 4 helical transmembrane spans lie at 13–33, 61–81, 82–102, and 107–127; these read VIMLVHLHIFFAFLSLALLVI, LIVSGVVILYLFAFGIEWWLV, AKFALLILYIVFAAKFFSKKV, and SIFFWLACVSFIGAMLIAYLK.

The protein belongs to the SirB2 family.

The protein resides in the cell inner membrane. This chain is Protein HI_1253, found in Haemophilus influenzae (strain ATCC 51907 / DSM 11121 / KW20 / Rd).